Reading from the N-terminus, the 334-residue chain is BTB and MATH domain-containing protein 39 (334 aa).

An MATH domain is found at 14 to 141 (IVTLVFNIYN…EGRFQIEFDL (128 aa)). The 66-residue stretch at 164-229 (ADGELITDGK…LQLDSFEVSV (66 aa)) folds into the BTB domain.

This chain is BTB and MATH domain-containing protein 39 (bath-39), found in Caenorhabditis elegans.